A 105-amino-acid chain; its full sequence is MTTNRLVLSGTVCKVPIRKVSPAGIPHCQFVLEHRSQQQEAGLSRQAWCRMPVIASGQLLQVLTHSITVGSRLTVSGFISCHQGRNGLNKLVLHAEQIELIDSGD.

An SSB domain is found at 1 to 102 (MTTNRLVLSG…LHAEQIELID (102 aa)).

Belongs to the PriB family. In terms of assembly, homodimer. Interacts with PriA and DnaT. Component of the replication restart primosome. Primosome assembly occurs via a 'hand-off' mechanism. PriA binds to replication forks, subsequently PriB then DnaT bind; DnaT then displaces ssDNA to generate the helicase loading substrate.

Involved in the restart of stalled replication forks, which reloads the replicative helicase on sites other than the origin of replication; the PriA-PriB pathway is the major replication restart pathway. During primosome assembly it facilitates complex formation between PriA and DnaT on DNA; stabilizes PriA on DNA. Stimulates the DNA unwinding activity of PriA helicase. The protein is Replication restart protein PriB of Photorhabdus laumondii subsp. laumondii (strain DSM 15139 / CIP 105565 / TT01) (Photorhabdus luminescens subsp. laumondii).